The sequence spans 192 residues: Ion-translocating oxidoreductase complex subunit B (192 aa).

The hydrophobic stretch occupies residues 1–26 (MNAIWIAVAAVSLLGLAFGAILGYAS). In terms of domain architecture, 4Fe-4S spans 32 to 91 (EDDPVVEKIDEILPQSQCGQCGYPGCRPYAEAISCNGEKINRCAPGGEAVMLKIAELLNV). 12 residues coordinate [4Fe-4S] cluster: Cys-49, Cys-52, Cys-57, Cys-74, Cys-117, Cys-120, Cys-123, Cys-127, Cys-147, Cys-150, Cys-153, and Cys-157. 4Fe-4S ferredoxin-type domains follow at residues 108 to 137 (MVAVIDENNCIGCTKCIQACPVDAIVGATR) and 138 to 167 (AMHTVMSDLCTGCNLCVDPCPTHCISLQPV).

It belongs to the 4Fe4S bacterial-type ferredoxin family. RnfB subfamily. In terms of assembly, the complex is composed of six subunits: RsxA, RsxB, RsxC, RsxD, RsxE and RsxG. Requires [4Fe-4S] cluster as cofactor.

The protein resides in the cell inner membrane. Functionally, part of a membrane-bound complex that couples electron transfer with translocation of ions across the membrane. Required to maintain the reduced state of SoxR. In Escherichia coli O139:H28 (strain E24377A / ETEC), this protein is Ion-translocating oxidoreductase complex subunit B.